The chain runs to 358 residues: Protein phosphatase 1 regulatory subunit 3G (358 aa).

Residues Met-1–Glu-71 are disordered. Low complexity predominate over residues Glu-11 to Ala-29. Ser-86 bears the Phosphoserine mark. The region spanning Ala-210–Arg-350 is the CBM21 domain. The segment covering Glu-270 to Pro-280 has biased composition (low complexity). The tract at residues Glu-270–Pro-295 is disordered.

Functionally, glycogen-targeting subunit for protein phosphatase 1 (PP1). Involved in the regulation of hepatic glycogenesis in a manner coupled to the fasting-feeding cycle and distinct from other glycogen-targeting subunits. The protein is Protein phosphatase 1 regulatory subunit 3G (PPP1R3G) of Homo sapiens (Human).